Reading from the N-terminus, the 169-residue chain is Large ribosomal subunit protein uL5 (169 aa).

It belongs to the universal ribosomal protein uL5 family. Part of the 50S ribosomal subunit; contacts the 5S rRNA and probably tRNA. Forms a bridge to the 30S subunit in the 70S ribosome.

Functionally, this is one of the proteins that bind and probably mediate the attachment of the 5S RNA into the large ribosomal subunit, where it forms part of the central protuberance. In the 70S ribosome it contacts protein S13 of the 30S subunit (bridge B1b), connecting the 2 subunits; this bridge is implicated in subunit movement. May contact the P site tRNA; the 5S rRNA and some of its associated proteins might help stabilize positioning of ribosome-bound tRNAs. In Methanococcoides burtonii (strain DSM 6242 / NBRC 107633 / OCM 468 / ACE-M), this protein is Large ribosomal subunit protein uL5.